A 173-amino-acid chain; its full sequence is Shikimate kinase 1 (173 aa).

ATP is bound at residue 14-19 (GAGKST). Residue serine 18 coordinates Mg(2+). Residues aspartate 36, arginine 60, and glycine 82 each contribute to the substrate site. Arginine 120 lines the ATP pocket. Position 140 (arginine 140) interacts with substrate. An ATP-binding site is contributed by glutamine 157.

This sequence belongs to the shikimate kinase family. In terms of assembly, monomer. Mg(2+) is required as a cofactor.

It localises to the cytoplasm. It catalyses the reaction shikimate + ATP = 3-phosphoshikimate + ADP + H(+). It functions in the pathway metabolic intermediate biosynthesis; chorismate biosynthesis; chorismate from D-erythrose 4-phosphate and phosphoenolpyruvate: step 5/7. In terms of biological role, catalyzes the specific phosphorylation of the 3-hydroxyl group of shikimic acid using ATP as a cosubstrate. The protein is Shikimate kinase 1 of Serratia proteamaculans (strain 568).